Here is a 332-residue protein sequence, read N- to C-terminus: D-alanine--D-alanine ligase (332 aa).

Residues 124-329 (KMWFSALNIP…FPDYLLSNIN (206 aa)) enclose the ATP-grasp domain. 154–209 (ALVNWGSIFVKAASQGSSVGCYRIDNQEDVASTLAQAFTYSDYVIVEKTISARELE) is a binding site for ATP. Mg(2+)-binding residues include Asp283, Glu296, and Asn298.

Belongs to the D-alanine--D-alanine ligase family. It depends on Mg(2+) as a cofactor. Requires Mn(2+) as cofactor.

It is found in the cytoplasm. The catalysed reaction is 2 D-alanine + ATP = D-alanyl-D-alanine + ADP + phosphate + H(+). It participates in cell wall biogenesis; peptidoglycan biosynthesis. Functionally, cell wall formation. This is D-alanine--D-alanine ligase from Shewanella piezotolerans (strain WP3 / JCM 13877).